The primary structure comprises 528 residues: Cytochrome P450 monooxygenase ppsD (528 aa).

A helical membrane pass occupies residues 2 to 21 (LVLVSLVLCLTGFCLLQWAL). Asn137 carries an N-linked (GlcNAc...) asparagine glycan. Residue Cys441 coordinates heme. Asn450 and Asn463 each carry an N-linked (GlcNAc...) asparagine glycan.

The protein belongs to the cytochrome P450 family. It depends on heme as a cofactor.

Its subcellular location is the membrane. Functionally, cytochrome P450 monooxygenase; part of the gene cluster that mediates the biosynthesis of 2,4'-dihydroxy-3'-methoxypropiophenone. The first step of the pathway is the conversion of acetate into acetyl-CoA by the acyl-CoA ligase ppsA. Acetyl-CoA is then used as a starter unit by the polyketide synthase ppsB and condensed with 4 malonyl-CoA unit to produce the pentaketide backbone. During polyketide extension, the polykedite chain is probably reduced and dehydrated by the KR and PT domains, respectively. O-methylation seems to be catalyzed by an unknown methyltransferase rather than by the CMeT domain of ppsB. Two hydroxylations and one further decarboxylation step catalyzed by yet unknown enzymes are then required to yield 4'-hydroxy-3'-methoxypropiophenone. PpsC functions as a carrier protein to transport 4'-hydroxy-3'-methoxypropiophenone to a specific cell compartment in which 4'-hydroxy-3'-methoxypropiophenone is hydroxylated to 2,4'-dihydroxy-3'-methoxypropiophenone by a still to be identified enzyme. In Aspergillus oryzae (strain ATCC 42149 / RIB 40) (Yellow koji mold), this protein is Cytochrome P450 monooxygenase ppsD.